We begin with the raw amino-acid sequence, 440 residues long: Ribulose bisphosphate carboxylase large chain (440 aa).

At Lys4 the chain carries N6,N6,N6-trimethyllysine. 2 residues coordinate substrate: Asn113 and Thr163. Lys165 functions as the Proton acceptor in the catalytic mechanism. A substrate-binding site is contributed by Lys167. Mg(2+)-binding residues include Lys191, Asp193, and Glu194. Residue Lys191 is modified to N6-carboxylysine. Catalysis depends on His284, which acts as the Proton acceptor. Substrate is bound by residues Arg285, His317, and Ser369.

This sequence belongs to the RuBisCO large chain family. Type I subfamily. Heterohexadecamer of 8 large chains and 8 small chains; disulfide-linked. The disulfide link is formed within the large subunit homodimers. It depends on Mg(2+) as a cofactor. Post-translationally, the disulfide bond which can form in the large chain dimeric partners within the hexadecamer appears to be associated with oxidative stress and protein turnover.

The protein localises to the plastid. Its subcellular location is the chloroplast. The enzyme catalyses 2 (2R)-3-phosphoglycerate + 2 H(+) = D-ribulose 1,5-bisphosphate + CO2 + H2O. It carries out the reaction D-ribulose 1,5-bisphosphate + O2 = 2-phosphoglycolate + (2R)-3-phosphoglycerate + 2 H(+). Functionally, ruBisCO catalyzes two reactions: the carboxylation of D-ribulose 1,5-bisphosphate, the primary event in carbon dioxide fixation, as well as the oxidative fragmentation of the pentose substrate in the photorespiration process. Both reactions occur simultaneously and in competition at the same active site. The sequence is that of Ribulose bisphosphate carboxylase large chain from Pteris vittata (Chinese ladder brake).